Reading from the N-terminus, the 378-residue chain is Protein RecA (378 aa).

Residue glycine 79–threonine 86 coordinates ATP.

The protein belongs to the RecA family.

The protein resides in the cytoplasm. Its function is as follows. Can catalyze the hydrolysis of ATP in the presence of single-stranded DNA, the ATP-dependent uptake of single-stranded DNA by duplex DNA, and the ATP-dependent hybridization of homologous single-stranded DNAs. It interacts with LexA causing its activation and leading to its autocatalytic cleavage. In Streptococcus equi subsp. zooepidemicus (strain H70), this protein is Protein RecA.